The sequence spans 308 residues: tRNA uridine(34) hydroxylase (308 aa).

Positions 128-222 (ADENTVVVDT…YLEEVPREQS (95 aa)) constitute a Rhodanese domain. The active-site Cysteine persulfide intermediate is cysteine 182.

This sequence belongs to the TrhO family.

The enzyme catalyses uridine(34) in tRNA + AH2 + O2 = 5-hydroxyuridine(34) in tRNA + A + H2O. Functionally, catalyzes oxygen-dependent 5-hydroxyuridine (ho5U) modification at position 34 in tRNAs. This Brucella suis biovar 1 (strain 1330) protein is tRNA uridine(34) hydroxylase.